The following is a 190-amino-acid chain: E3 ubiquitin-protein ligase RNF4 (190 aa).

Positions 1-16 (MSTRKRRGGAINSRQA) are required for ubiquitination activity. Residues 1-29 (MSTRKRRGGAINSRQAQKRTREATSTPEI) are disordered. Residues 4-61 (RKRRGGAINSRQAQKRTREATSTPEISLEAEPIELVETAGDEIVDLTCESLEPVVVDL) form a mediates interaction with TRPS1 region. Short sequence motifs (SUMO interaction motif) lie at residues 36 to 39 (IELV), 46 to 49 (IVDL), 57 to 59 (VVV), and 67 to 70 (VVIV). Phosphoserine is present on residues Ser-94 and Ser-95. Residues Cys-132, Cys-135, Cys-154, His-156, Cys-159, Cys-162, Cys-173, and Cys-176 each coordinate Zn(2+). The RING-type zinc finger occupies 132–177 (CPICMDGYSEIVQNGRLIVSTECGHVFCSQCLRDSLKNANTCPTCR).

Homodimer (via RING-type zinc finger domain). Interacts with GSC2. Interacts with AR/the androgen receptor and TBP. Interacts with TCF20. Interacts with PATZ1. Interacts with TRPS1; negatively regulates TRPS1 transcriptional repressor activity. Interacts with PML (isoform PML-1, isoform PML-2, isoform PML-3, isoform PML-4, isoform PML-5 and isoform PML-6). Interacts with PRDM1/Blimp-1. Sumoylated; conjugated by one or two SUMO1 moieties. Post-translationally, autoubiquitinated. As to expression, widely expressed at low levels in many tissues; highly expressed in testis.

The protein resides in the cytoplasm. Its subcellular location is the nucleus. It localises to the PML body. It catalyses the reaction S-ubiquitinyl-[E2 ubiquitin-conjugating enzyme]-L-cysteine + [acceptor protein]-L-lysine = [E2 ubiquitin-conjugating enzyme]-L-cysteine + N(6)-ubiquitinyl-[acceptor protein]-L-lysine.. The protein operates within protein modification; protein ubiquitination. Its function is as follows. E3 ubiquitin-protein ligase which binds polysumoylated chains covalently attached to proteins and mediates 'Lys-6'-, 'Lys-11'-, 'Lys-48'- and 'Lys-63'-linked polyubiquitination of those substrates and their subsequent targeting to the proteasome for degradation. Regulates the degradation of several proteins including PML and the transcriptional activator PEA3. Involved in chromosome alignment and spindle assembly, it regulates the kinetochore CENPH-CENPI-CENPK complex by targeting polysumoylated CENPI to proteasomal degradation. Regulates the cellular responses to hypoxia and heat shock through degradation of respectively EPAS1 and PARP1. Alternatively, it may also bind DNA/nucleosomes and have a more direct role in the regulation of transcription for instance enhancing basal transcription and steroid receptor-mediated transcriptional activation. Catalyzes ubiquitination of sumoylated PARP1 in response to PARP1 trapping to chromatin, leading to PARP1 removal from chromatin by VCP/p97. This chain is E3 ubiquitin-protein ligase RNF4, found in Homo sapiens (Human).